A 301-amino-acid polypeptide reads, in one-letter code: Averufin oxidase A (301 aa).

Residues 1-23 (MPTYALLGATGATGSAILRCLLA) form the signal peptide. Asn62, Asn86, and Asn190 each carry an N-linked (GlcNAc...) asparagine glycan.

The protein belongs to the avfA family.

It participates in mycotoxin biosynthesis. Averufin oxidase A; part of the fragmented gene cluster that mediates the biosynthesis of dothistromin (DOTH), a polyketide toxin very similar in structure to the aflatoxin precursor, versicolorin B. The first step of the pathway is the conversion of acetate to norsolorinic acid (NOR) and requires the fatty acid synthase subunits hexA and hexB, as well as the polyketide synthase pksA. PksA combines a hexanoyl starter unit and 7 malonyl-CoA extender units to synthesize the precursor NOR. The hexanoyl starter unit is provided to the acyl-carrier protein (ACP) domain by the fungal fatty acid synthase hexA/hexB. The second step is the conversion of NOR to averantin (AVN) and requires the norsolorinic acid ketoreductase nor1, which catalyzes the dehydration of norsolorinic acid to form (1'S)-averantin. The cytochrome P450 monooxygenase avnA then catalyzes the hydroxylation of AVN to 5'hydroxyaverantin (HAVN). The next step is performed by adhA that transforms HAVN to averufin (AVF). Averufin might then be converted to hydroxyversicolorone by cypX and avfA. Hydroxyversicolorone is further converted versiconal hemiacetal acetate (VHA) by moxY. VHA is then the substrate for the versiconal hemiacetal acetate esterase est1 to yield versiconal (VAL). Versicolorin B synthase vbsA then converts VAL to versicolorin B (VERB) by closing the bisfuran ring. Then, the activity of the versicolorin B desaturase verB leads to versicolorin A (VERA). DotB, a predicted chloroperoxidase, may perform epoxidation of the A-ring of VERA. Alternatively, a cytochrome P450, such as cypX or avnA could catalyze this step. It is also possible that another, uncharacterized, cytochrome P450 enzyme is responsible for this step. Opening of the epoxide could potentially be achieved by the epoxide hydrolase epoA. However, epoA seems not to be required for DOTH biosynthesis, but other epoxide hydrolases may have the ability to complement this hydrolysis. Alternatively, opening of the epoxide ring could be achieved non-enzymatically. The next step is the deoxygenation of ring A to yield the 5,8-dihydroxyanthraquinone which is most likely catalyzed by the NADPH dehydrogenase encoded by ver1. The last stages of DOTH biosynthesis are proposed to involve hydroxylation of the bisfuran. OrdB and norB might have oxidative roles here. An alternative possibility is that cytochrome P450 monoogenases such as avnA and cypX might perform these steps in addition to previously proposed steps. In Dothistroma septosporum (Red band needle blight fungus), this protein is Averufin oxidase A.